We begin with the raw amino-acid sequence, 339 residues long: Phosphoribosylformylglycinamidine cyclo-ligase (339 aa).

This sequence belongs to the AIR synthase family.

It is found in the cytoplasm. It carries out the reaction 2-formamido-N(1)-(5-O-phospho-beta-D-ribosyl)acetamidine + ATP = 5-amino-1-(5-phospho-beta-D-ribosyl)imidazole + ADP + phosphate + H(+). The protein operates within purine metabolism; IMP biosynthesis via de novo pathway; 5-amino-1-(5-phospho-D-ribosyl)imidazole from N(2)-formyl-N(1)-(5-phospho-D-ribosyl)glycinamide: step 2/2. This is Phosphoribosylformylglycinamidine cyclo-ligase from Desulfitobacterium hafniense (strain DSM 10664 / DCB-2).